Consider the following 70-residue polypeptide: Small ribosomal subunit protein eS17 (70 aa).

This sequence belongs to the eukaryotic ribosomal protein eS17 family.

This Methanopyrus kandleri (strain AV19 / DSM 6324 / JCM 9639 / NBRC 100938) protein is Small ribosomal subunit protein eS17.